We begin with the raw amino-acid sequence, 1114 residues long: Hephaestin-like protein (1114 aa).

Residues 1–26 (MMDRSNAAFVLTACFIFSQLICHVAA) form the signal peptide. Plastocyanin-like domains lie at 27–210 (ITRT…LICR), 218–365 (QQSG…VTKC), 380–562 (KRTY…LLTC), 572–719 (TRKD…VNTC), 730–915 (KTRD…LIIC), and 924–1114 (TEER…LLKA). The Extracellular portion of the chain corresponds to 27 to 1091 (ITRTYYIAAV…KTTPKPITAA (1065 aa)). An N-linked (GlcNAc...) asparagine glycan is attached at Asn121. 4 residues coordinate Cu cation: His129, His131, His189, and His191. The cysteines at positions 183 and 209 are disulfide-linked. Asn236 carries N-linked (GlcNAc...) asparagine glycosylation. Cys284 and Cys365 are joined by a disulfide. Cu cation-binding residues include His303, Cys346, and His351. N-linked (GlcNAc...) asparagine glycosylation is found at Asn361, Asn478, and Asn489. 2 disulfides stabilise this stretch: Cys536-Cys562 and Cys638-Cys719. Residues His657, Cys700, His705, and Met710 each coordinate Cu cation. Asn831 carries N-linked (GlcNAc...) asparagine glycosylation. An intrachain disulfide couples Cys889 to Cys915. An N-linked (GlcNAc...) asparagine glycan is attached at Asn944. His1014, His1017, His1019, His1059, Cys1060, His1061, His1065, and Met1070 together coordinate Cu cation. Residues 1092 to 1112 (SSFVTSSIFIYLSFPVLAMLL) form a helical membrane-spanning segment. Residues 1113-1114 (KA) are Cytoplasmic-facing.

The protein belongs to the multicopper oxidase family. Cu cation serves as cofactor. As to expression, component of the acid-insoluble and acid-soluble organic matrix of the aragonitic skeleton (at protein level).

Its subcellular location is the membrane. Functionally, may function as a ferroxidase and may be involved in copper transport and homeostasis. This chain is Hephaestin-like protein, found in Acropora millepora (Staghorn coral).